The primary structure comprises 110 residues: Small ribosomal subunit protein uS10 (110 aa).

It belongs to the universal ribosomal protein uS10 family. In terms of assembly, part of the 30S ribosomal subunit.

Functionally, involved in the binding of tRNA to the ribosomes. This Ehrlichia ruminantium (strain Gardel) protein is Small ribosomal subunit protein uS10.